A 438-amino-acid chain; its full sequence is Transcription termination factor Rho (438 aa).

Positions 70-145 constitute a Rho RNA-BD domain; that stretch reads YILFTGILEI…LKIEAINYLP (76 aa). ATP contacts are provided by residues 188–193, 200–205, and R231; these read GKGQRA and RTGKTE.

The protein belongs to the Rho family. As to quaternary structure, homohexamer. The homohexamer assembles into an open ring structure.

Its function is as follows. Facilitates transcription termination by a mechanism that involves Rho binding to the nascent RNA, activation of Rho's RNA-dependent ATPase activity, and release of the mRNA from the DNA template. This Helicobacter pylori (strain J99 / ATCC 700824) (Campylobacter pylori J99) protein is Transcription termination factor Rho.